The sequence spans 427 residues: Peptidase B (427 aa).

Mn(2+) contacts are provided by lysine 195 and aspartate 200. Lysine 207 is a catalytic residue. Mn(2+) contacts are provided by aspartate 218, aspartate 277, and glutamate 279. Arginine 281 is an active-site residue.

Belongs to the peptidase M17 family. Homohexamer. It depends on Mn(2+) as a cofactor.

It is found in the cytoplasm. The enzyme catalyses Release of an N-terminal amino acid, Xaa, from a peptide or arylamide. Xaa is preferably Glu or Asp but may be other amino acids, including Leu, Met, His, Cys and Gln.. Its function is as follows. Probably plays an important role in intracellular peptide degradation. The sequence is that of Peptidase B from Salmonella arizonae (strain ATCC BAA-731 / CDC346-86 / RSK2980).